The sequence spans 640 residues: Serine/threonine-protein kinase ELM1 (640 aa).

The interval 27 to 47 is disordered; the sequence is ELDSPPITPTSQTSSFGSSFS. The segment covering 35–47 has biased composition (low complexity); it reads PTSQTSSFGSSFS. Residues 88–420 enclose the Protein kinase domain; that stretch reads YTLGVSAGSG…PIDSRNHSQI (333 aa). ATP is bound by residues 94-102 and Lys-117; that span reads AGSGQFGYV. At Ser-152 the chain carries Phosphoserine. The active-site Proton acceptor is the Asp-259. A phosphoserine mark is found at Ser-516 and Ser-519. Positions 520-529 are enriched in polar residues; sequence LPNLTVNNDK. 2 disordered regions span residues 520–547 and 562–587; these read LPNLTVNNDKQNSDMKTDRSESSSHSSL and SPKENGNRTHINCSQDKPSSPLMDRT. Residues 530-541 show a composition bias toward basic and acidic residues; sequence QNSDMKTDRSES. The span at 569 to 579 shows a compositional bias: polar residues; that stretch reads RTHINCSQDKP.

The protein belongs to the protein kinase superfamily. Ser/Thr protein kinase family. Mg(2+) serves as cofactor.

It carries out the reaction L-seryl-[protein] + ATP = O-phospho-L-seryl-[protein] + ADP + H(+). The enzyme catalyses L-threonyl-[protein] + ATP = O-phospho-L-threonyl-[protein] + ADP + H(+). Its function is as follows. Important role in G1 events required for bud emergence and septin organization. Coordinates cell growth and cell division at G2/M, essential for efficient cytokinesis and for regulation of SWE1. The protein is Serine/threonine-protein kinase ELM1 (ELM1) of Saccharomyces cerevisiae (strain ATCC 204508 / S288c) (Baker's yeast).